Here is a 55-residue protein sequence, read N- to C-terminus: Large ribosomal subunit protein bL32c (55 aa).

It belongs to the bacterial ribosomal protein bL32 family.

It localises to the plastid. Its subcellular location is the chloroplast. This is Large ribosomal subunit protein bL32c from Daucus carota (Wild carrot).